A 279-amino-acid polypeptide reads, in one-letter code: Tryptophan 2,3-dioxygenase (279 aa).

Residues 48–52, Tyr110, and Arg114 contribute to the substrate site; that span reads FIIQH. Residue His237 coordinates heme. A substrate-binding site is contributed by Thr251.

Belongs to the tryptophan 2,3-dioxygenase family. As to quaternary structure, homotetramer. Requires heme as cofactor.

It catalyses the reaction L-tryptophan + O2 = N-formyl-L-kynurenine. The protein operates within amino-acid degradation; L-tryptophan degradation via kynurenine pathway; L-kynurenine from L-tryptophan: step 1/2. In terms of biological role, heme-dependent dioxygenase that catalyzes the oxidative cleavage of the L-tryptophan (L-Trp) pyrrole ring and converts L-tryptophan to N-formyl-L-kynurenine. Catalyzes the oxidative cleavage of the indole moiety. This chain is Tryptophan 2,3-dioxygenase, found in Bradyrhizobium diazoefficiens (strain JCM 10833 / BCRC 13528 / IAM 13628 / NBRC 14792 / USDA 110).